The chain runs to 206 residues: MDSQQEDLRFPGMWVSLYFGILGLCSVITGGCIIFLHWRKNLRREEHAQQWVEVMRAATFTYSPLLYWINKRRRYGMNAAINTGPAPAVTKTETEVQNPDVLWDLDIPEGRSHADQDSNPKAEAPAPLQPALQLAPQQPQARSPFPLPIFQEVPFAPPLCNLPPLLNHSVSYPLATCPERNVLFHSLLNLAQEDHSFNAKPFPSEL.

A helical transmembrane segment spans residues 15 to 35; that stretch reads VSLYFGILGLCSVITGGCIIF.

Its subcellular location is the membrane. In Homo sapiens (Human), this protein is Testis-expressed protein 38 (TEX38).